The primary structure comprises 427 residues: rRNA-processing protein EBP2 (427 aa).

2 stretches are compositionally biased toward basic and acidic residues: residues 29-40 (KKKSQELKKEEP) and 49-65 (KKLE…KEVA). Residues 29–190 (KKKSQELKKE…FDSDADVVPH (162 aa)) form a disordered region. Residues 45–174 (ASNLKKLEKK…KEEQEEEQDV (130 aa)) adopt a coiled-coil conformation. Positions 79-88 (KEKRKLKKEL) are enriched in basic residues. A compositionally biased stretch (basic and acidic residues) spans 89–105 (KKMQEQDATEAQKHMSG). Ser-104 is subject to Phosphoserine. Residues 106–126 (DEDESGDDREEEEEEEEEEEG) show a composition bias toward acidic residues. The segment covering 127 to 138 (RLDLEKLAKSDS) has biased composition (basic and acidic residues). 2 stretches are compositionally biased toward acidic residues: residues 139–155 (ESED…EDED) and 163–185 (EEKE…DSDA). A phosphoserine mark is found at Ser-177 and Ser-183. Coiled-coil stretches lie at residues 234–265 (KDIY…KRLK) and 291–348 (KLIE…KHNE). The interval 361–427 (EVEGKRFDRG…PGKSRRARRF (67 aa)) is disordered. Over residues 397–407 (ATSSADVSGFS) the composition is skewed to polar residues. The span at 409-427 (RKMKGKTNRPGKSRRARRF) shows a compositional bias: basic residues.

The protein belongs to the EBP2 family. In terms of assembly, interacts with LOC1, NOP12, SIZ2, ULS1 and WSS1. In terms of processing, sumoylated.

The protein resides in the nucleus. The protein localises to the nucleolus. Required for the processing of the 27S pre-rRNA. Probably involved in the step of the processing of the 27 SA precursor into the 27 SB intermediate. The sequence is that of rRNA-processing protein EBP2 (EBP2) from Saccharomyces cerevisiae (strain ATCC 204508 / S288c) (Baker's yeast).